The primary structure comprises 873 residues: MVDQRPRAGSRSFTAPSLIGTNGHFASVGDAAHDPKAYEHGVQVIDEEKEFNPNLSKYLSLEDVTNAGFNYHLISVFGSQSTGKSTLLNHLFGTQFSVMSDKERRQTTKGIWMSKNKTKHEDPNARMADNILVMDVEGTDGRERGEDQDFERKSALFALATSEVLIVNIWEHQVGLYQGANMGLLKTVFEVNLQLFLKDKNTTHRSLLFFVIRDFMGNTPLKNLETTLLEDLSRIWASLSKPQGLERSTIHDYFDFAFYGLPHKGYKPDEFAAEAKKLGSRFREGRRDRKEQLMGASIENGVFLPEYHRRIPADGFAHYANGIWDQIVNNKDLDLPTQQELLAQFRCDEISREVIAAFDEAIAPFEEKQAAGVRAGELVILGGLGAAMRGARVKAVKNFETEASRYHKGVYQRKRAELEGKIDTRLKALFQGQLNAAHKSGVKDFSDAVSNAVKAGQKKGASYDFAEIVKQETKAALERYEKEARASLVEGTSWSNYKQELKLYQKDLAEVSGQLRRDEMRRLATRVERWVRSRLSDSVSLEFNSLGSGRGGSGAPETGEKPSESKIWDRIWNLFVETVLDAERRFTDRATSFDASVDEVDVGLWRLRRKSWGVLRLKVEEEMMEGNLLLKLRENFEDKFRYDEAGVPRIWRPTDDIEGIYTRARESTLTLIPLLSKFHLAENNAPPPLDRWVGHTPSSATAADEEDLTPIGGVDEEDGKSLEEEVTILNDAKRQDLTVRFKKAADGVYVEAKRSAIGGITQVPLYFYGLLLALGWNEIWAVLRNPAYFFLLFVCAIGAYVTYQLNLWGPILKMADAASRQALEELKKKLREFLEASDTGRQAMAMSSGEEYEMSSLNRGGKRVEDEDENDDI.

Over 1–762 (MVDQRPRAGS…KRSAIGGITQ (762 aa)) the chain is Cytoplasmic. A GB1/RHD3-type G domain is found at 68-320 (GFNYHLISVF…IPADGFAHYA (253 aa)). 78 to 85 (GSQSTGKS) serves as a coordination point for GTP. The stretch at 462–519 (SYDFAEIVKQETKAALERYEKEARASLVEGTSWSNYKQELKLYQKDLAEVSGQLRRDE) forms a coiled coil. A disordered region spans residues 691 to 716 (RWVGHTPSSATAADEEDLTPIGGVDE). The segment covering 703–716 (ADEEDLTPIGGVDE) has biased composition (acidic residues). The helical transmembrane segment at 763 to 783 (VPLYFYGLLLALGWNEIWAVL) threads the bilayer. Over 784–786 (RNP) the chain is Lumenal. The chain crosses the membrane as a helical span at residues 787–807 (AYFFLLFVCAIGAYVTYQLNL). Topologically, residues 808–873 (WGPILKMADA…VEDEDENDDI (66 aa)) are cytoplasmic. Residues 812–839 (LKMADAASRQALEELKKKLREFLEASDT) adopt a coiled-coil conformation. The disordered stretch occupies residues 839–873 (TGRQAMAMSSGEEYEMSSLNRGGKRVEDEDENDDI).

This sequence belongs to the TRAFAC class dynamin-like GTPase superfamily. GB1/RHD3 GTPase family. RHD3 subfamily.

It is found in the endoplasmic reticulum membrane. Its function is as follows. Cooperates with the reticulon proteins and tubule-shaping DP1 family proteins to generate and maintain the structure of the tubular endoplasmic reticulum network. Has GTPase activity, which is required for its function in ER organization. The protein is Protein sey1 (sey1) of Talaromyces marneffei (strain ATCC 18224 / CBS 334.59 / QM 7333) (Penicillium marneffei).